Reading from the N-terminus, the 924-residue chain is WSC domain-containing protein ARB_07867 (924 aa).

Positions 1-24 (MAGILSVVHIIIIFIVRFKSSTDS) are cleaved as a signal peptide. The WSC 1 domain maps to 62–160 (TWTYLGCYTD…PGRLNLYQNT (99 aa)). Residue N90 is glycosylated (N-linked (GlcNAc...) asparagine). A disordered region spans residues 166 to 190 (DTMTTSAPSTETGSPTTTSVPEPTQ). The segment covering 169-189 (TTSAPSTETGSPTTTSVPEPT) has biased composition (low complexity). A WSC 2 domain is found at 195-289 (GWQYSGCYQD…PSRLSVYSKG (95 aa)). N-linked (GlcNAc...) asparagine glycans are attached at residues N290, N333, N387, N455, N552, N758, and N833. Residues 307-404 (GWKYQGCLQD…GNLITYYRWM (98 aa)) form the WSC 3 domain.

The protein localises to the secreted. In Arthroderma benhamiae (strain ATCC MYA-4681 / CBS 112371) (Trichophyton mentagrophytes), this protein is WSC domain-containing protein ARB_07867.